A 140-amino-acid polypeptide reads, in one-letter code: Phosphatidylinositol N-acetylglucosaminyltransferase subunit GPI19 (140 aa).

Residues 1–12 (MYTKEYYWFSQY) are Cytoplasmic-facing. A helical transmembrane segment spans residues 13–33 (MIITSTLVLTIIWSILPSSLG). At 34–52 (EAAPKQFINTLLDIFPQRR) the chain is on the lumenal side. A helical membrane pass occupies residues 53–73 (WIITLESIMLMGMLCTYIGLL). Residues 74-140 (MYNEDTLTPP…YLYDNDHTST (67 aa)) are Cytoplasmic-facing.

This sequence belongs to the GPI19 family. Component of the phosphatidylinositol N-acetylglucosaminyltransferase (GPI-GlcNAc transferase) complex composed of at least GPI1, GPI2, GPI3, GPI15, GPI19 and ERI1. Interacts with GPI2.

It is found in the endoplasmic reticulum membrane. It catalyses the reaction a 1,2-diacyl-sn-glycero-3-phospho-(1D-myo-inositol) + UDP-N-acetyl-alpha-D-glucosamine = a 6-(N-acetyl-alpha-D-glucosaminyl)-1-(1,2-diacyl-sn-glycero-3-phospho)-1D-myo-inositol + UDP + H(+). Its pathway is glycolipid biosynthesis; glycosylphosphatidylinositol-anchor biosynthesis. Part of the complex catalyzing the transfer of N-acetylglucosamine from UDP-N-acetylglucosamine to phosphatidylinositol, the first step of GPI biosynthesis. Involved in cell wall biosynthesis. The sequence is that of Phosphatidylinositol N-acetylglucosaminyltransferase subunit GPI19 (GPI19) from Saccharomyces cerevisiae (strain ATCC 204508 / S288c) (Baker's yeast).